A 268-amino-acid chain; its full sequence is F-actin-capping protein subunit alpha (268 aa).

Ser2 is subject to N-acetylserine. Ser17 carries the phosphoserine modification.

The protein belongs to the F-actin-capping protein alpha subunit family. As to quaternary structure, component of the F-actin capping complex, composed of a heterodimer of an alpha and a beta subunit. Interacts with BSP1 (via C-terminus); leading to recruitment of the F-actin capping complex to actin cortical patches and the acomyosin contractile ring.

The protein resides in the cytoplasm. The protein localises to the cytoskeleton. It is found in the actin patch. Functionally, F-actin-capping proteins bind in a Ca(2+)-independent manner to the fast growing ends of actin filaments (barbed end) thereby blocking the exchange of subunits at these ends. Unlike other capping proteins (such as gelsolin and severin), these proteins do not sever actin filaments. The sequence is that of F-actin-capping protein subunit alpha (CAP1) from Saccharomyces cerevisiae (strain ATCC 204508 / S288c) (Baker's yeast).